The sequence spans 51 residues: Sperm protamine P1 (51 aa).

It belongs to the protamine P1 family. Testis.

It localises to the nucleus. The protein localises to the chromosome. Functionally, protamines substitute for histones in the chromatin of sperm during the haploid phase of spermatogenesis. They compact sperm DNA into a highly condensed, stable and inactive complex. This Macaca mulatta (Rhesus macaque) protein is Sperm protamine P1 (PRM1).